The primary structure comprises 158 residues: Ribosome maturation factor RimP (158 aa).

Belongs to the RimP family.

Its subcellular location is the cytoplasm. Functionally, required for maturation of 30S ribosomal subunits. The protein is Ribosome maturation factor RimP of Streptococcus suis (strain 98HAH33).